We begin with the raw amino-acid sequence, 286 residues long: Polyamine aminopropyltransferase (286 aa).

The PABS domain occupies 5–238; it reads KTWHEKLYCH…GVMVFAWGTN (234 aa). Residues His-64 and Asp-88 each contribute to the spermidine site. S-methyl-5'-thioadenosine is bound by residues Glu-108 and 140–141; that span reads DG. The active-site Proton acceptor is the Asp-158. Spermidine is bound at residue 158–161; the sequence is DSTD.

It belongs to the spermidine/spermine synthase family. Homodimer or homotetramer.

It is found in the cytoplasm. The catalysed reaction is S-adenosyl 3-(methylsulfanyl)propylamine + putrescine = S-methyl-5'-thioadenosine + spermidine + H(+). It functions in the pathway amine and polyamine biosynthesis; spermidine biosynthesis; spermidine from putrescine: step 1/1. Functionally, catalyzes the irreversible transfer of a propylamine group from the amino donor S-adenosylmethioninamine (decarboxy-AdoMet) to putrescine (1,4-diaminobutane) to yield spermidine. The protein is Polyamine aminopropyltransferase of Buchnera aphidicola subsp. Acyrthosiphon pisum (strain 5A).